We begin with the raw amino-acid sequence, 258 residues long: MNFIIIIPARFFSSRFPGKLLADIQGKPMIIRVIEKALTTKTTKIIVATDSVSIKQIVEYEYYSFGDKVEVCLTYSDHQSGTERISEIVKRYRFADDQIIVQLQGDEPLISSYMIHQIVDVFNMTTSNNISVSTLATPIFFYNEVIDSNIVKVVVNIYGVALYFSRSMIPWMSINHDFNQELGIWLRHIGIYAYRVNFLSRYMNWIKSSLEKYEMLEQLRILWNGETIYVSVMDNIRNISVDTPESLRKVNELFLISN.

The protein belongs to the KdsB family.

It localises to the cytoplasm. It carries out the reaction 3-deoxy-alpha-D-manno-oct-2-ulosonate + CTP = CMP-3-deoxy-beta-D-manno-octulosonate + diphosphate. It functions in the pathway nucleotide-sugar biosynthesis; CMP-3-deoxy-D-manno-octulosonate biosynthesis; CMP-3-deoxy-D-manno-octulosonate from 3-deoxy-D-manno-octulosonate and CTP: step 1/1. Its pathway is bacterial outer membrane biogenesis; lipopolysaccharide biosynthesis. Activates KDO (a required 8-carbon sugar) for incorporation into bacterial lipopolysaccharide in Gram-negative bacteria. The chain is 3-deoxy-manno-octulosonate cytidylyltransferase from Blochmanniella floridana.